Consider the following 22-residue polypeptide: Phospholipase A2 (22 aa).

This sequence belongs to the phospholipase A2 family. Requires Ca(2+) as cofactor.

Its subcellular location is the secreted. The catalysed reaction is a 1,2-diacyl-sn-glycero-3-phosphocholine + H2O = a 1-acyl-sn-glycero-3-phosphocholine + a fatty acid + H(+). PA2 catalyzes the calcium-dependent hydrolysis of the 2-acyl groups in 3-sn-phosphoglycerides. The sequence is that of Phospholipase A2 from Struthio camelus (Common ostrich).